The primary structure comprises 318 residues: 5'-3' exonuclease (318 aa).

Positions A194–T278 constitute a 5'-3' exonuclease domain.

In terms of biological role, 5'-3' exonuclease acting preferentially on double-stranded DNA. This is 5'-3' exonuclease from Mycobacterium tuberculosis (strain ATCC 25618 / H37Rv).